The primary structure comprises 40 residues: Photosystem II reaction center protein Psb30 (40 aa).

The chain crosses the membrane as a helical span at residues 12–32 (VIFQLTSVALIIIAGPAVIFV).

The protein belongs to the Psb30/Ycf12 family. In terms of assembly, PSII is composed of 1 copy each of membrane proteins PsbA, PsbB, PsbC, PsbD, PsbE, PsbF, PsbH, PsbI, PsbJ, PsbK, PsbL, PsbM, PsbT, PsbX, PsbY, PsbZ, Psb30/Ycf12, peripheral proteins PsbO, CyanoQ (PsbQ), PsbU, PsbV and a large number of cofactors. It forms dimeric complexes.

Its subcellular location is the cellular thylakoid membrane. Its function is as follows. A core subunit of photosystem II (PSII), probably helps stabilize the reaction center. The polypeptide is Photosystem II reaction center protein Psb30 (Nostoc sp. (strain PCC 7120 / SAG 25.82 / UTEX 2576)).